A 284-amino-acid chain; its full sequence is Putative ABC transporter ATP-binding protein SCO5958 (284 aa).

The ABC transporter domain occupies V15 to L250. An ATP-binding site is contributed by G48 to T55.

The protein belongs to the ABC transporter superfamily.

The protein localises to the cell membrane. Probably part of an ABC transporter complex. Responsible for energy coupling to the transport system. The sequence is that of Putative ABC transporter ATP-binding protein SCO5958 from Streptomyces coelicolor (strain ATCC BAA-471 / A3(2) / M145).